A 586-amino-acid polypeptide reads, in one-letter code: uncharacterized protein (586 aa).

2 disordered regions span residues 17-64 (VRRT…ETEE) and 80-123 (HSCS…GGAN). Residues 28 to 37 (PSTSGSIAWT) show a composition bias toward polar residues. 2 stretches are compositionally biased toward low complexity: residues 38-52 (SSESGSAHSSRVSSS) and 80-91 (HSCSAATTSQQS). Over residues 94-110 (QSKEHRIGGIKKEEKPI) the composition is skewed to basic and acidic residues. Over residues 112 to 123 (MGGGSSENGGAN) the composition is skewed to gly residues. 12 consecutive transmembrane segments (helical) span residues 151 to 171 (WVILVIFMFLSGSNGAQWIQY), 191 to 211 (WTSMIYMLTYILFFIPAAWLL), 218 to 238 (LSVLLGALGNCVGAWIKLLST), 243 to 263 (FWVTFVGQTIVGASQMFTLGI), 283 to 303 (LGVFGNQLGIAVGFVLPPLIV), 317 to 337 (TLFLGSAVLNTSILALVICFF), 375 to 395 (FVILFITYGINTGVFYAISTL), 413 to 433 (YVGLLIVVAGMAGSVVGGFIL), 441 to 461 (LTTIMIYLFSFVGMLSFTLTI), 466 to 486 (MVLVFINAALLGFFMTGYLPI), 513 to 533 (IFGIALTWLMGIVMHGFGTFT), and 536 to 556 (IIMSSCLVVGTILTCFIREDL).

Belongs to the major facilitator superfamily. Feline leukemia virus subgroup C receptor (TC 2.A.1.28.1) family.

It localises to the membrane. This is an uncharacterized protein from Caenorhabditis elegans.